Reading from the N-terminus, the 585-residue chain is Dihydroxy-acid dehydratase, mitochondrial (585 aa).

The transit peptide at 1-20 (MGLLTKVATSRQFSTTRCVA) directs the protein to the mitochondrion. [2Fe-2S] cluster is bound at residue cysteine 70. Residue aspartate 102 coordinates Mg(2+). Residue cysteine 143 coordinates [2Fe-2S] cluster. Aspartate 144 provides a ligand contact to Mg(2+). Cysteine 221 contacts [2Fe-2S] cluster. Residue glutamate 474 participates in Mg(2+) binding. The active-site Proton acceptor is the serine 500.

It belongs to the IlvD/Edd family. It depends on [2Fe-2S] cluster as a cofactor. Requires Mg(2+) as cofactor.

It is found in the mitochondrion. The enzyme catalyses (2R)-2,3-dihydroxy-3-methylbutanoate = 3-methyl-2-oxobutanoate + H2O. The catalysed reaction is (2R,3R)-2,3-dihydroxy-3-methylpentanoate = (S)-3-methyl-2-oxopentanoate + H2O. It functions in the pathway amino-acid biosynthesis; L-isoleucine biosynthesis; L-isoleucine from 2-oxobutanoate: step 3/4. It participates in amino-acid biosynthesis; L-valine biosynthesis; L-valine from pyruvate: step 3/4. With respect to regulation, catalytic activity is inactivated under iron-limiting conditions. Dihydroxyacid dehydratase that catalyzes the third step in the common pathway leading to biosynthesis of branched-chain amino acids. Catalyzes the dehydration of (2R,3R)-2,3-dihydroxy-3-methylpentanoate (2,3-dihydroxy-3-methylvalerate) into 2-oxo-3-methylpentanoate (2-oxo-3-methylvalerate) and of (2R)-2,3-dihydroxy-3-methylbutanoate (2,3-dihydroxyisovalerate) into 2-oxo-3-methylbutanoate (2-oxoisovalerate), the penultimate precursor to L-isoleucine and L-valine, respectively. Required for the synthesis of alpha-isopropylmalate which modulates the activity of LEU3 and subsequently regulates the expression of LEU1. The protein is Dihydroxy-acid dehydratase, mitochondrial of Saccharomyces cerevisiae (strain ATCC 204508 / S288c) (Baker's yeast).